A 260-amino-acid chain; its full sequence is Triosephosphate isomerase (260 aa).

Substrate is bound at residue 11–13; that stretch reads NWK. The active-site Electrophile is the His103. Glu175 functions as the Proton acceptor in the catalytic mechanism. Substrate contacts are provided by residues Gly181, Ser220, and 241 to 242; that span reads GG.

The protein belongs to the triosephosphate isomerase family. Homodimer.

It localises to the cytoplasm. The catalysed reaction is D-glyceraldehyde 3-phosphate = dihydroxyacetone phosphate. It functions in the pathway carbohydrate biosynthesis; gluconeogenesis. Its pathway is carbohydrate degradation; glycolysis; D-glyceraldehyde 3-phosphate from glycerone phosphate: step 1/1. In terms of biological role, involved in the gluconeogenesis. Catalyzes stereospecifically the conversion of dihydroxyacetone phosphate (DHAP) to D-glyceraldehyde-3-phosphate (G3P). The protein is Triosephosphate isomerase of Shewanella frigidimarina (strain NCIMB 400).